The chain runs to 554 residues: (E)-beta-caryophyllene synthase (554 aa).

Asp313 and Asp317 together coordinate Mn(2+). The short motif at 313–317 (DDIYD) is the DDXXD motif element. Homodimerization regions lie at residues 319 to 325 (YGTLDEL) and 391 to 427 (EAQW…LAVI). Mn(2+) contacts are provided by Asp457 and Glu465.

This sequence belongs to the terpene synthase family. Homodimer. Requires Mn(2+) as cofactor. Mg(2+) is required as a cofactor. Expressed in peltate glandular trichomes. Present at low levels in flowers, leaves and stems.

The catalysed reaction is (2E,6E)-farnesyl diphosphate = (-)-(E)-beta-caryophyllene + diphosphate. It carries out the reaction (2E,6E)-farnesyl diphosphate = alpha-humulene + diphosphate. It participates in secondary metabolite biosynthesis; terpenoid biosynthesis. Functionally, involved in the biosynthesis of phenolic sesquiterpenes natural products. Sesquiterpene synthase converting (2E,6E)-farnesyl diphosphate (FPP) to (E)-beta-caryophyllene and alpha-humulene. This chain is (E)-beta-caryophyllene synthase, found in Origanum vulgare (Wild marjoram).